A 167-amino-acid polypeptide reads, in one-letter code: Small ribosomal subunit protein uS9 (167 aa).

The interval 136–167 is disordered; the sequence is KRAGFLTRDPRATERKKYGLKKARKAPQYSKR. The span at 143-152 shows a compositional bias: basic and acidic residues; that stretch reads RDPRATERKK. Positions 153–167 are enriched in basic residues; sequence YGLKKARKAPQYSKR.

It belongs to the universal ribosomal protein uS9 family.

The sequence is that of Small ribosomal subunit protein uS9 from Nocardia farcinica (strain IFM 10152).